The primary structure comprises 500 residues: MKDFPIAISLLFALLSPVLLPCSGDSTGGVEDDSPATVCIVGSGIGGSSVAHFLRNYSVSTGLNQAKILMFERHEIVGGRMRTVTVAGDTFEAGGSILHPKNYHVKDFVERFNLTVRLPTPIEESSAIGIWDGKRFVVKTFGSGTKFPFLDTIVSWVNDLYLFLRYGLSLLRMSSFIENTVDNFLKYYESLESRPIFDNVEGMLKWSGLYNLTKLTLQEKLSEAQLSPLLVNELVTVITRINYGQSVLISGLAGAVSLAGSGGGLWSVEGGNWQMAAKLINHSDVTLHLNEKIESISYLENHYELKSTKGNSYKCDVTVVATPLDEVDIQFSPTISIPKRELQHTHTTFVRGLLNPGYFGMKSLSDVPALVGTLEDPLIPFSCISILRKYSKTDMTYKIFTRQPASDSLLDELFSRRTETVRIDWGAYPKYHAPEVFAPFILDDHHLYYVNAFENAASTMETSAVAGENIARLIISRFMTKESLSSSDKRSCSSGLHSDS.

Positions 1 to 24 (MKDFPIAISLLFALLSPVLLPCSG) are cleaved as a signal peptide. Residues N56, N113, N211, and N281 are each glycosylated (N-linked (GlcNAc...) asparagine).

This sequence belongs to the prenylcysteine oxidase family. FAD serves as cofactor. As to expression, expressed in seedilings, flowers, stems, leaves and roots.

Its subcellular location is the lysosome. The catalysed reaction is S-(2E,6E)-farnesyl-L-cysteine + O2 + H2O = (2E,6E)-farnesal + L-cysteine + H2O2. In terms of biological role, involved in the degradation of prenylcysteine. Cleaves specifically the thioether bond of S-farnesyl-L-cysteine and has no activity with S-geranylgeranyl-L-cysteine. Also recognizes N-acetyl-farnesylcysteine and may have a role in deprenylation of farnesylated proteins. The polypeptide is Farnesylcysteine lyase (Arabidopsis thaliana (Mouse-ear cress)).